Consider the following 881-residue polypeptide: Alanine--tRNA ligase (881 aa).

Residues His565, His569, Cys672, and His676 each contribute to the Zn(2+) site.

Belongs to the class-II aminoacyl-tRNA synthetase family. Zn(2+) serves as cofactor.

It is found in the cytoplasm. The enzyme catalyses tRNA(Ala) + L-alanine + ATP = L-alanyl-tRNA(Ala) + AMP + diphosphate. In terms of biological role, catalyzes the attachment of alanine to tRNA(Ala) in a two-step reaction: alanine is first activated by ATP to form Ala-AMP and then transferred to the acceptor end of tRNA(Ala). Also edits incorrectly charged Ser-tRNA(Ala) and Gly-tRNA(Ala) via its editing domain. In Novosphingobium aromaticivorans (strain ATCC 700278 / DSM 12444 / CCUG 56034 / CIP 105152 / NBRC 16084 / F199), this protein is Alanine--tRNA ligase.